The chain runs to 205 residues: Large ribosomal subunit protein uL3 (205 aa).

Belongs to the universal ribosomal protein uL3 family. Part of the 50S ribosomal subunit. Forms a cluster with proteins L14 and L19.

Its function is as follows. One of the primary rRNA binding proteins, it binds directly near the 3'-end of the 23S rRNA, where it nucleates assembly of the 50S subunit. In Porphyromonas gingivalis (strain ATCC 33277 / DSM 20709 / CIP 103683 / JCM 12257 / NCTC 11834 / 2561), this protein is Large ribosomal subunit protein uL3.